Consider the following 297-residue polypeptide: 4-hydroxy-tetrahydrodipicolinate synthase (297 aa).

T46 provides a ligand contact to pyruvate. The active-site Proton donor/acceptor is the Y134. The active-site Schiff-base intermediate with substrate is the K162. I204 serves as a coordination point for pyruvate.

It belongs to the DapA family. In terms of assembly, homotetramer; dimer of dimers.

It localises to the cytoplasm. The enzyme catalyses L-aspartate 4-semialdehyde + pyruvate = (2S,4S)-4-hydroxy-2,3,4,5-tetrahydrodipicolinate + H2O + H(+). It functions in the pathway amino-acid biosynthesis; L-lysine biosynthesis via DAP pathway; (S)-tetrahydrodipicolinate from L-aspartate: step 3/4. Its function is as follows. Catalyzes the condensation of (S)-aspartate-beta-semialdehyde [(S)-ASA] and pyruvate to 4-hydroxy-tetrahydrodipicolinate (HTPA). The sequence is that of 4-hydroxy-tetrahydrodipicolinate synthase from Stenotrophomonas maltophilia (strain R551-3).